The primary structure comprises 73 residues: MKPINIQDQFLNQIRKDNTFVTVFLLNGFQLRGQVKGFDNFTVLLETEGKQQLIYKHAISTFAPQKNVQLELE.

A Sm domain is found at 8-68; sequence DQFLNQIRKD…ISTFAPQKNV (61 aa).

It belongs to the Hfq family. As to quaternary structure, homohexamer.

RNA chaperone that binds small regulatory RNA (sRNAs) and mRNAs to facilitate mRNA translational regulation in response to envelope stress, environmental stress and changes in metabolite concentrations. Also binds with high specificity to tRNAs. In Bacillus velezensis (strain DSM 23117 / BGSC 10A6 / LMG 26770 / FZB42) (Bacillus amyloliquefaciens subsp. plantarum), this protein is RNA-binding protein Hfq.